The chain runs to 541 residues: Protein wntless homolog (541 aa).

Over 1 to 15 the chain is Cytoplasmic; it reads MAGAIIENMGTKKLC. The helical transmembrane segment at 16–36 threads the bilayer; sequence IVGGILLVFQIIAFLVGGLIA. Over 37–232 the chain is Lumenal; the sequence is PGPTTAVSYM…GIHQNGGFTK (196 aa). Residues 101–232 form an interaction with Wnt proteins region; it reads MEMSPWFQFM…GIHQNGGFTK (132 aa). The helical transmembrane segment at 233 to 253 threads the bilayer; it reads VWFAMKTFLTPSIFIIMVWYW. Residues 254-268 lie on the Cytoplasmic side of the membrane; sequence RRITMMSRPPVLLEK. The helical transmembrane segment at 269 to 289 threads the bilayer; the sequence is VIFALGISMTFINIPVEWFSI. Topologically, residues 290-303 are lumenal; it reads GFDWTWMLLFGDIR. A helical membrane pass occupies residues 304-324; sequence QGIFYAMLLSFWIIFCGEHMM. The Cytoplasmic segment spans residues 325–331; that stretch reads DQHERNH. The helical transmembrane segment at 332–352 threads the bilayer; it reads IAGYWKQVGPIAVGSFCLFIF. Residues 353 to 380 are Lumenal-facing; that stretch reads DMCERGVQLTNPFYSIWTTDIGTELAMA. The helical transmembrane segment at 381–401 threads the bilayer; sequence FIIVAGICLCLYFLFLCFMVF. Residues 402 to 431 lie on the Cytoplasmic side of the membrane; it reads QVFRNISGKQSSLPAMSKVRRLHYEGLIFR. Residues 432-452 traverse the membrane as a helical segment; it reads FKFLMLITLACAAMTVIFFIV. Residues 453-471 are Lumenal-facing; that stretch reads SQVTEGHWKWGGVTVQVNS. Residues 472 to 492 traverse the membrane as a helical segment; that stretch reads AFFTGIYGMWNLYVFALMFLY. The Cytoplasmic portion of the chain corresponds to 493–541; that stretch reads APSHKNYGEDQSNGDLGVHSGEELQLTTTITHVDGPTEIYKLTRKEAQE.

This sequence belongs to the wntless family. Interacts with WNT3A. Interacts with WNT1, WNT3 and WNT5A.

Its subcellular location is the golgi apparatus membrane. The protein resides in the cytoplasmic vesicle membrane. It localises to the cell membrane. It is found in the endoplasmic reticulum membrane. The protein localises to the early endosome membrane. Its function is as follows. Regulates Wnt proteins sorting and secretion in a feedback regulatory mechanism. This reciprocal interaction plays a key role in the regulation of expression, subcellular location, binding and organelle-specific association of Wnt proteins. Also plays an important role in establishment of the anterior-posterior body axis formation during development. The polypeptide is Protein wntless homolog (WLS) (Pongo abelii (Sumatran orangutan)).